Here is a 352-residue protein sequence, read N- to C-terminus: 3-isopropylmalate dehydrogenase (352 aa).

76 to 89 contacts NAD(+); that stretch reads GYKWENLPHDKKPE. Residues Arg96, Arg106, Arg134, and Asp220 each coordinate substrate. Asp220, Asp244, and Asp248 together coordinate Mg(2+). 277 to 289 contributes to the NAD(+) binding site; sequence GSAPDIAGQNKAN.

The protein belongs to the isocitrate and isopropylmalate dehydrogenases family. LeuB type 1 subfamily. Homodimer. It depends on Mg(2+) as a cofactor. Requires Mn(2+) as cofactor.

It localises to the cytoplasm. The catalysed reaction is (2R,3S)-3-isopropylmalate + NAD(+) = 4-methyl-2-oxopentanoate + CO2 + NADH. It functions in the pathway amino-acid biosynthesis; L-leucine biosynthesis; L-leucine from 3-methyl-2-oxobutanoate: step 3/4. Its function is as follows. Catalyzes the oxidation of 3-carboxy-2-hydroxy-4-methylpentanoate (3-isopropylmalate) to 3-carboxy-4-methyl-2-oxopentanoate. The product decarboxylates to 4-methyl-2 oxopentanoate. The polypeptide is 3-isopropylmalate dehydrogenase (Chlorobaculum tepidum (strain ATCC 49652 / DSM 12025 / NBRC 103806 / TLS) (Chlorobium tepidum)).